A 195-amino-acid polypeptide reads, in one-letter code: Nucleoid occlusion factor SlmA (195 aa).

In terms of domain architecture, HTH tetR-type spans 6-66; sequence PSRRESILQA…ALIEFAEEAV (61 aa). The segment at residues 29-48 is a DNA-binding region (H-T-H motif); the sequence is TTAGLAKTVGVTEAALYRHF. Positions 118–138 form a coiled coil; the sequence is RKRASQFFERLETQIRQALKE.

The protein belongs to the nucleoid occlusion factor SlmA family. Homodimer. Interacts with FtsZ.

It is found in the cytoplasm. Its subcellular location is the nucleoid. Functionally, required for nucleoid occlusion (NO) phenomenon, which prevents Z-ring formation and cell division over the nucleoid. Acts as a DNA-associated cell division inhibitor that binds simultaneously chromosomal DNA and FtsZ, and disrupts the assembly of FtsZ polymers. SlmA-DNA-binding sequences (SBS) are dispersed on non-Ter regions of the chromosome, preventing FtsZ polymerization at these regions. This is Nucleoid occlusion factor SlmA from Marinobacter nauticus (strain ATCC 700491 / DSM 11845 / VT8) (Marinobacter aquaeolei).